Consider the following 390-residue polypeptide: L-serine phosphate decarboxylase Cj1436c (390 aa).

N6-(pyridoxal phosphate)lysine is present on Lys243.

Belongs to the class-I pyridoxal-phosphate-dependent aminotransferase family. It depends on pyridoxal 5'-phosphate as a cofactor.

It carries out the reaction O-phospho-L-serine + H(+) = phosphoethanolamine + CO2. Its pathway is capsule biogenesis; capsule polysaccharide biosynthesis. Pyridoxal phosphate (PLP)-dependent decarboxylase involved in the biosynthesis of amidated D-glucuronic acid structures found on the capsular polysaccharide (CPS) of C.jejuni. Catalyzes the decarboxylation of L-serine phosphate to ethanolamine phosphate. Less active with L-threonine phosphate. No activity with L-serine, L-threonine, L-aspartate or L-glutamate. This is L-serine phosphate decarboxylase Cj1436c from Campylobacter jejuni subsp. jejuni serotype O:2 (strain ATCC 700819 / NCTC 11168).